Reading from the N-terminus, the 426-residue chain is Deoxyguanosinetriphosphate triphosphohydrolase-like protein (426 aa).

A disordered region spans residues Met-1–Ala-23. Residues Arg-67–Ser-217 enclose the HD domain.

The protein belongs to the dGTPase family. Type 2 subfamily.

This is Deoxyguanosinetriphosphate triphosphohydrolase-like protein from Corynebacterium efficiens (strain DSM 44549 / YS-314 / AJ 12310 / JCM 11189 / NBRC 100395).